A 282-amino-acid chain; its full sequence is Phenylethanolamine N-methyltransferase (282 aa).

Residue Ser-7 is modified to Phosphoserine. S-adenosyl-L-methionine-binding positions include Tyr-35, Tyr-40, 79–80 (GS), Tyr-85, Asp-101, Asn-106, 158–159 (DV), and Ala-181. Octopamine is bound by residues Glu-219 and Asp-267.

It carries out the reaction phenylethanolamine + S-adenosyl-L-methionine = N-methylphenylethanolamine + S-adenosyl-L-homocysteine + H(+). The enzyme catalyses (R)-noradrenaline + S-adenosyl-L-methionine = (R)-adrenaline + S-adenosyl-L-homocysteine + H(+). The catalysed reaction is (R)-normetanephrine + S-adenosyl-L-methionine = (R)-metanephrine + S-adenosyl-L-homocysteine + H(+). It catalyses the reaction (R)-octopamine + S-adenosyl-L-methionine = (R)-synephrine + S-adenosyl-L-homocysteine + H(+). It participates in catecholamine biosynthesis; (R)-adrenaline biosynthesis; (R)-adrenaline from (R)-noradrenaline: step 1/1. With respect to regulation, inhibited by methyl methanethiosulfonate, phenylglyoxal, tetranitromethane and diethyl pyrocarbonate. Inhibited by 4-oxo-1,4-dihydro-quinoline-3,7-dicarboxylic acid, 4-(benzo[d][1,3]dioxol-5-ylamino)-4-oxobutanoic acid and 1,4-diaminonaphthalene-2,6-disulfonic acid. In terms of biological role, catalyzes the transmethylation of nonepinephrine (noradrenaline) to form epinephrine (adrenaline), using S-adenosyl-L-methionine as the methyl donor. Other substrates include phenylethanolamine and octopamine. Also methylates normetanephrine. This Homo sapiens (Human) protein is Phenylethanolamine N-methyltransferase (PNMT).